Reading from the N-terminus, the 91-residue chain is DNA-directed RNA polymerase subunit omega (91 aa).

It belongs to the RNA polymerase subunit omega family. The RNAP catalytic core consists of 2 alpha, 1 beta, 1 beta' and 1 omega subunit. When a sigma factor is associated with the core the holoenzyme is formed, which can initiate transcription.

It carries out the reaction RNA(n) + a ribonucleoside 5'-triphosphate = RNA(n+1) + diphosphate. Its function is as follows. Promotes RNA polymerase assembly. Latches the N- and C-terminal regions of the beta' subunit thereby facilitating its interaction with the beta and alpha subunits. The sequence is that of DNA-directed RNA polymerase subunit omega from Aeromonas hydrophila subsp. hydrophila (strain ATCC 7966 / DSM 30187 / BCRC 13018 / CCUG 14551 / JCM 1027 / KCTC 2358 / NCIMB 9240 / NCTC 8049).